Here is a 448-residue protein sequence, read N- to C-terminus: MRYFMSYSAPNIGFVSLGCPKNLVDSERILTELRTDGYNIIPTYENADLVIVNTCGFIDSAVQESLEAIGEALEENGKVIVTGCLGAKENQIREVHPKVLEITGPHSYEAVMEHVHKYVPRPERNPYTSLVPAQGVKLTPKHYAYLKISEGCDHKCTFCIIPSLRGDLDSRPITQVLDEAKRLVDSGVKELLVVSQDTSAYALDQSKENQNKTVFWNGAPIKNNLITLCRQLGTLGAWIRLHYVYPYPHVDDLIPLMAEGKILPYLDIPLQHASPKVLKAMKRPGSVERVLERIQKWREICPELTLRSTFIVGFPGETEEDFQMLLDFLQEAQLDRVGCFKFSPVEGAVATDMADQVPEEVKEQRFQRFMELQQQISAQRLQQKIGKTLPVIIDDIDEDGIIGRSMADAPEIDGVVYVDNRSESAVKIGDIIQVAITNADEYDLWGTC.

In terms of domain architecture, MTTase N-terminal spans 10 to 120 (PNIGFVSLGC…VMEHVHKYVP (111 aa)). Residues cysteine 19, cysteine 55, cysteine 84, cysteine 152, cysteine 156, and cysteine 159 each contribute to the [4Fe-4S] cluster site. Residues 138 to 379 (LTPKHYAYLK…MELQQQISAQ (242 aa)) enclose the Radical SAM core domain. The region spanning 382–448 (QQKIGKTLPV…ADEYDLWGTC (67 aa)) is the TRAM domain.

This sequence belongs to the methylthiotransferase family. RimO subfamily. [4Fe-4S] cluster serves as cofactor.

It is found in the cytoplasm. The enzyme catalyses L-aspartate(89)-[ribosomal protein uS12]-hydrogen + (sulfur carrier)-SH + AH2 + 2 S-adenosyl-L-methionine = 3-methylsulfanyl-L-aspartate(89)-[ribosomal protein uS12]-hydrogen + (sulfur carrier)-H + 5'-deoxyadenosine + L-methionine + A + S-adenosyl-L-homocysteine + 2 H(+). Its function is as follows. Catalyzes the methylthiolation of an aspartic acid residue of ribosomal protein uS12. This chain is Ribosomal protein uS12 methylthiotransferase RimO, found in Mannheimia succiniciproducens (strain KCTC 0769BP / MBEL55E).